The chain runs to 204 residues: Thiamine-phosphate synthase (204 aa).

Residues Q34–K38 and D66 contribute to the 4-amino-2-methyl-5-(diphosphooxymethyl)pyrimidine site. D67 and D86 together coordinate Mg(2+). S104 lines the 4-amino-2-methyl-5-(diphosphooxymethyl)pyrimidine pocket. Residue T131–T133 coordinates 2-[(2R,5Z)-2-carboxy-4-methylthiazol-5(2H)-ylidene]ethyl phosphate. Residue K134 coordinates 4-amino-2-methyl-5-(diphosphooxymethyl)pyrimidine. 2-[(2R,5Z)-2-carboxy-4-methylthiazol-5(2H)-ylidene]ethyl phosphate contacts are provided by residues G160 and V180–S181.

This sequence belongs to the thiamine-phosphate synthase family. It depends on Mg(2+) as a cofactor.

The catalysed reaction is 2-[(2R,5Z)-2-carboxy-4-methylthiazol-5(2H)-ylidene]ethyl phosphate + 4-amino-2-methyl-5-(diphosphooxymethyl)pyrimidine + 2 H(+) = thiamine phosphate + CO2 + diphosphate. It catalyses the reaction 2-(2-carboxy-4-methylthiazol-5-yl)ethyl phosphate + 4-amino-2-methyl-5-(diphosphooxymethyl)pyrimidine + 2 H(+) = thiamine phosphate + CO2 + diphosphate. It carries out the reaction 4-methyl-5-(2-phosphooxyethyl)-thiazole + 4-amino-2-methyl-5-(diphosphooxymethyl)pyrimidine + H(+) = thiamine phosphate + diphosphate. Its pathway is cofactor biosynthesis; thiamine diphosphate biosynthesis; thiamine phosphate from 4-amino-2-methyl-5-diphosphomethylpyrimidine and 4-methyl-5-(2-phosphoethyl)-thiazole: step 1/1. In terms of biological role, condenses 4-methyl-5-(beta-hydroxyethyl)thiazole monophosphate (THZ-P) and 2-methyl-4-amino-5-hydroxymethyl pyrimidine pyrophosphate (HMP-PP) to form thiamine monophosphate (TMP). The chain is Thiamine-phosphate synthase from Picrophilus torridus (strain ATCC 700027 / DSM 9790 / JCM 10055 / NBRC 100828 / KAW 2/3).